The primary structure comprises 171 residues: Co-chaperone protein HscB (171 aa).

One can recognise a J domain in the interval 2-74 (DYFTLFGLPA…LARAEYLLSL (73 aa)).

This sequence belongs to the HscB family. As to quaternary structure, interacts with HscA and stimulates its ATPase activity. Interacts with IscU.

Co-chaperone involved in the maturation of iron-sulfur cluster-containing proteins. Seems to help targeting proteins to be folded toward HscA. The polypeptide is Co-chaperone protein HscB (Enterobacter sp. (strain 638)).